Reading from the N-terminus, the 104-residue chain is ATP-dependent Clp protease adapter protein ClpS (104 aa).

The protein belongs to the ClpS family. In terms of assembly, binds to the N-terminal domain of the chaperone ClpA.

In terms of biological role, involved in the modulation of the specificity of the ClpAP-mediated ATP-dependent protein degradation. In Burkholderia mallei (strain NCTC 10247), this protein is ATP-dependent Clp protease adapter protein ClpS.